A 325-amino-acid chain; its full sequence is GTP 3',8-cyclase (325 aa).

Residues N4–L219 form the Radical SAM core domain. Residue R13 participates in GTP binding. Positions 20 and 24 each coordinate [4Fe-4S] cluster. An S-adenosyl-L-methionine-binding site is contributed by Y26. C27 provides a ligand contact to [4Fe-4S] cluster. A GTP-binding site is contributed by R63. G67 is a binding site for S-adenosyl-L-methionine. T94 serves as a coordination point for GTP. S118 is a binding site for S-adenosyl-L-methionine. K155 is a binding site for GTP. M189 provides a ligand contact to S-adenosyl-L-methionine. Residues C254 and C257 each coordinate [4Fe-4S] cluster. Residue R259–R261 coordinates GTP. C271 contributes to the [4Fe-4S] cluster binding site.

It belongs to the radical SAM superfamily. MoaA family. As to quaternary structure, monomer and homodimer. Requires [4Fe-4S] cluster as cofactor.

The enzyme catalyses GTP + AH2 + S-adenosyl-L-methionine = (8S)-3',8-cyclo-7,8-dihydroguanosine 5'-triphosphate + 5'-deoxyadenosine + L-methionine + A + H(+). The protein operates within cofactor biosynthesis; molybdopterin biosynthesis. Functionally, catalyzes the cyclization of GTP to (8S)-3',8-cyclo-7,8-dihydroguanosine 5'-triphosphate. This Desulforamulus reducens (strain ATCC BAA-1160 / DSM 100696 / MI-1) (Desulfotomaculum reducens) protein is GTP 3',8-cyclase.